Consider the following 142-residue polypeptide: MAKKVQAYVKLQVAAGMANPSPPVGPALGQQGVNIMEFCKAFNAKTDSVEKGLPIPVVITVYSDRSFTFVTKTPPAAVLLKKAAGIKSGSGKPNKDKVGKVTSAQVREIAETKAADMTGSNVEAMTRSIEGTARSMGLVVED.

It belongs to the universal ribosomal protein uL11 family. In terms of assembly, part of the ribosomal stalk of the 50S ribosomal subunit. Interacts with L10 and the large rRNA to form the base of the stalk. L10 forms an elongated spine to which L12 dimers bind in a sequential fashion forming a multimeric L10(L12)X complex. Post-translationally, one or more lysine residues are methylated.

Functionally, forms part of the ribosomal stalk which helps the ribosome interact with GTP-bound translation factors. The sequence is that of Large ribosomal subunit protein uL11 from Serratia proteamaculans (strain 568).